A 278-amino-acid polypeptide reads, in one-letter code: Membrane protein insertase YidC 2 (278 aa).

The N-terminal stretch at 1–18 is a signal peptide; the sequence is MHKRLFITLLGFIILLAG. Residue Cys-19 is the site of N-palmitoyl cysteine attachment. Cys-19 carries the S-diacylglycerol cysteine lipid modification. 4 helical membrane-spanning segments follow: residues 55–75, 132–152, 176–196, and 224–244; these read GFAI…FMLI, MLGC…YMSL, LIMT…NSIH, and AAAL…QMHF.

Belongs to the OXA1/ALB3/YidC family. Type 2 subfamily.

It localises to the cell membrane. Its function is as follows. Required for the insertion and/or proper folding and/or complex formation of integral membrane proteins into the membrane. Involved in integration of membrane proteins that insert both dependently and independently of the Sec translocase complex, as well as at least some lipoproteins. The protein is Membrane protein insertase YidC 2 of Staphylococcus epidermidis (strain ATCC 12228 / FDA PCI 1200).